The chain runs to 672 residues: Cytadherence high molecular weight protein 3 (672 aa).

25 consecutive repeat copies span residues 98–100 (YDQ), 106–108 (YDQ), 160–162 (PVV), 197–199 (YDQ), 206–208 (YDQ), 211–213 (YDQ), 221–223 (YDQ), 226–228 (YDQ), 235–237 (YDQ), 249–251 (YDQ), 288–290 (PVV), 310–319 (VEPTPTPVVE), 312–315 (PTPT), 316–318 (PVV), 322–324 (PVV), 330–339 (VEPTPTPVVE), 332–335 (PTPT), 336–338 (PVV), 354–358 (PQPTP), 385–389 (PTPVP), 396–400 (PQPTP), 402–404 (PVV), 413–415 (PVV), 424–428 (PTPAP), and 454–456 (PVV). Residues 98-251 (YDQVNNTFYD…NAYNTQNYDQ (154 aa)) are 9 X 3 AA repeats OF Y-D-Q. Residues 160-456 (PVVDPDATPE…QTTPAVPPVV (297 aa)) form an 8 X 3 AA repeats of P-V-V region. Positions 177-197 (GLDPLPQAPDEYQDTTAPPAY) are disordered. Positions 310–339 (VEPTPTPVVETAPVVEAPKVVEPTPTPVVE) are 2 X 10 AA repeats of V-E-P-T-P-T-P-V-V-E. A 6 X 5 AA repeats of P-X-P-X-P region spans residues 312–428 (PTPTPVVETA…PKVVTPTPAP (117 aa)).

The protein resides in the cell projection. It localises to the attachment organelle membrane. Component of the cytoskeleton-like structure which stabilizes the shape of the wall-less mycoplasma. This cytoskeleton-like network of accessory proteins containing HMW proteins 1 to 5 allows the proper anchoring of cytadhesin proteins in the mycoplasmal membrane at the attachment organelle. Essential for successful surface parasitism. This is Cytadherence high molecular weight protein 3 (hmw3) from Mycoplasma pneumoniae (strain ATCC 29342 / M129 / Subtype 1) (Mycoplasmoides pneumoniae).